The primary structure comprises 429 residues: 3-phosphoshikimate 1-carboxyvinyltransferase (429 aa).

K22, S23, and R27 together coordinate 3-phosphoshikimate. K22 serves as a coordination point for phosphoenolpyruvate. 2 residues coordinate phosphoenolpyruvate: G94 and R122. Residues S167, Q169, D315, and K342 each coordinate 3-phosphoshikimate. Q169 is a binding site for phosphoenolpyruvate. D315 serves as the catalytic Proton acceptor. Phosphoenolpyruvate is bound by residues R346 and R388.

The protein belongs to the EPSP synthase family. In terms of assembly, monomer.

Its subcellular location is the cytoplasm. The catalysed reaction is 3-phosphoshikimate + phosphoenolpyruvate = 5-O-(1-carboxyvinyl)-3-phosphoshikimate + phosphate. The protein operates within metabolic intermediate biosynthesis; chorismate biosynthesis; chorismate from D-erythrose 4-phosphate and phosphoenolpyruvate: step 6/7. Its function is as follows. Catalyzes the transfer of the enolpyruvyl moiety of phosphoenolpyruvate (PEP) to the 5-hydroxyl of shikimate-3-phosphate (S3P) to produce enolpyruvyl shikimate-3-phosphate and inorganic phosphate. The sequence is that of 3-phosphoshikimate 1-carboxyvinyltransferase from Geobacter metallireducens (strain ATCC 53774 / DSM 7210 / GS-15).